A 444-amino-acid chain; its full sequence is Endothelin-3 receptor (444 aa).

The first 18 residues, 1-18, serve as a signal peptide directing secretion; sequence MATVILFVAWMACLMVGV. Topologically, residues 19–88 are extracellular; the sequence is CYQEFQTQQN…SRAKIRHAFK (70 aa). A glycan (N-linked (GlcNAc...) asparagine) is linked at Asn-60. Residues 89–113 form a helical membrane-spanning segment; it reads YVTTILSCVIFLVGIVGNSTLLRII. Residues 114–124 lie on the Cytoplasmic side of the membrane; the sequence is YKNKCMRNGPN. A helical transmembrane segment spans residues 125 to 145; sequence VLIASLALGDLFYILIAIPII. At 146 to 161 the chain is on the extracellular side; that stretch reads SISFWLSTGHSEYIYQ. A helical transmembrane segment spans residues 162–180; sequence LVHLYRARVYSLSLCALSI. The Cytoplasmic segment spans residues 181 to 201; that stretch reads DRYRAVASWNRIRSIGIPVRK. The chain crosses the membrane as a helical span at residues 202-226; sequence AIELTLIWAVAIIVAVPEAIAFNLV. The Extracellular segment spans residues 227 to 254; the sequence is ELDFRGQTILVCMLPMEQTSDFMRFYQE. A helical membrane pass occupies residues 255–279; sequence VKVWWLFGFYFCLPLACTGVFYTLM. Topologically, residues 280 to 307 are cytoplasmic; the sequence is SCEMLSIKNGMRIALNDHMKQRREVAKT. The chain crosses the membrane as a helical span at residues 308–328; the sequence is VFCLVVIFALCWLPLHVSSIF. Topologically, residues 329–365 are extracellular; it reads VRLSATVKRACILKNKRSCIMAEIQTGVNYQLLMVMN. A helical membrane pass occupies residues 366–386; sequence YTGINMASLNSCIGPVALYFV. Over 387–444 the chain is Cytoplasmic; sequence SRKFKNCFQSCLCCWCHRPTLTITPMDEKGSGGKWKANGHDLDLDRSSSRLSNKYSSS. A disordered region spans residues 416–444; the sequence is GSGGKWKANGHDLDLDRSSSRLSNKYSSS. Positions 424–434 are enriched in basic and acidic residues; the sequence is NGHDLDLDRSS. Over residues 435 to 444 the composition is skewed to low complexity; the sequence is SRLSNKYSSS.

Belongs to the G-protein coupled receptor 1 family. Endothelin receptor subfamily.

It localises to the cell membrane. Its function is as follows. Receptor for endothelin-3. Mediates its action by association with G proteins that activate a phosphatidylinositol-calcium second messenger system. This chain is Endothelin-3 receptor, found in Xenopus laevis (African clawed frog).